The primary structure comprises 156 residues: Putative HTH-type transcriptional regulator BadM (156 aa).

The region spanning 4 to 130 is the HTH rrf2-type domain; the sequence is RLQKSTMCGL…RSVSITSLLK (127 aa). Residues 136–156 are disordered; it reads RRKTERGPNGASARHSSAGRA. The segment covering 145 to 156 has biased composition (low complexity); the sequence is GASARHSSAGRA.

The chain is Putative HTH-type transcriptional regulator BadM (badM) from Rhodopseudomonas palustris (strain ATCC BAA-98 / CGA009).